A 253-amino-acid polypeptide reads, in one-letter code: 5'-nucleotidase SurE (253 aa).

A divalent metal cation-binding residues include aspartate 8, aspartate 9, serine 39, and asparagine 95.

The protein belongs to the SurE nucleotidase family. The cofactor is a divalent metal cation.

It is found in the cytoplasm. It catalyses the reaction a ribonucleoside 5'-phosphate + H2O = a ribonucleoside + phosphate. In terms of biological role, nucleotidase that shows phosphatase activity on nucleoside 5'-monophosphates. This chain is 5'-nucleotidase SurE, found in Clostridium beijerinckii (strain ATCC 51743 / NCIMB 8052) (Clostridium acetobutylicum).